The chain runs to 120 residues: Probable early E4 13 kDa protein (120 aa).

This is Probable early E4 13 kDa protein from Human adenovirus A serotype 12 (HAdV-12).